Reading from the N-terminus, the 679-residue chain is MNNYKLQAPYEPNGDQPEAIKKLVKGVNTGKEFQTLLGATGTGKTFTIANVIQQTGRPALVLAHNKTLAAQLCNELREFFPKNAVEYFISYYDYYQPEAYVPVSDTYIAKTASINEEIDMLRHSATRSLFERKDVIVVASISCIYGLGIPSEYLKAAVKFEVGKSINLRSYLRSLVENQYTRNDIEITRGRFRIKGDVLEIGPAYEDRLIRIELFGDEVEAIRYVDPTTGEILESLEQVSVYPAKHFVTPKERLESAISAIRSELKTQLDKFTYEGKLLEAQRLEQRTKYDLEMLKEVGYCNGVENYARHLSGREEGSPPECLIDYFPKDWLLVVDESHVTCPQLHAMYNGDQSRKKVLIDHGFRLPSAADNRPLKCEEFWEKSKQTLFISATPGQWELDQCDGEFIEQVIRPTGVLDPVIDVRPSEGQIEDLLSEIRIRAEKNQRVLVTTLTKRMAEDLTDFLSENKVRVRYLHSEIHSIERIEIIQDLRMGEYDVLVGVNLLREGLDLPEVSLVAILDADKEGFLRAERSLIQTIGRAARHVEGVALLYADNFTDSMKRAISETERRRTIQKKYNQVNGITPKPAGKKIENSILSFLELSRKLDAGGLSKDLINIVNNKTDAILGSSDNQCLLEELPDLIEKLEIKMKDAAKELNFEEAANLRDRIKKLRQKLARNN.

Residues 25–176 (KGVNTGKEFQ…NLRSYLRSLV (152 aa)) form the Helicase ATP-binding domain. Position 38–45 (38–45 (GATGTGKT)) interacts with ATP. Residues 91–114 (YYDYYQPEAYVPVSDTYIAKTASI) carry the Beta-hairpin motif. Residues 429 to 583 (QIEDLLSEIR…KKYNQVNGIT (155 aa)) form the Helicase C-terminal domain. A UVR domain is found at 639–674 (PDLIEKLEIKMKDAAKELNFEEAANLRDRIKKLRQK).

The protein belongs to the UvrB family. In terms of assembly, forms a heterotetramer with UvrA during the search for lesions. Interacts with UvrC in an incision complex.

The protein resides in the cytoplasm. In terms of biological role, the UvrABC repair system catalyzes the recognition and processing of DNA lesions. A damage recognition complex composed of 2 UvrA and 2 UvrB subunits scans DNA for abnormalities. Upon binding of the UvrA(2)B(2) complex to a putative damaged site, the DNA wraps around one UvrB monomer. DNA wrap is dependent on ATP binding by UvrB and probably causes local melting of the DNA helix, facilitating insertion of UvrB beta-hairpin between the DNA strands. Then UvrB probes one DNA strand for the presence of a lesion. If a lesion is found the UvrA subunits dissociate and the UvrB-DNA preincision complex is formed. This complex is subsequently bound by UvrC and the second UvrB is released. If no lesion is found, the DNA wraps around the other UvrB subunit that will check the other stand for damage. The protein is UvrABC system protein B of Prochlorococcus marinus (strain MIT 9301).